A 103-amino-acid chain; its full sequence is Phosphoribosyl-ATP pyrophosphatase (103 aa).

It belongs to the PRA-PH family.

The protein localises to the cytoplasm. The enzyme catalyses 1-(5-phospho-beta-D-ribosyl)-ATP + H2O = 1-(5-phospho-beta-D-ribosyl)-5'-AMP + diphosphate + H(+). It participates in amino-acid biosynthesis; L-histidine biosynthesis; L-histidine from 5-phospho-alpha-D-ribose 1-diphosphate: step 2/9. The protein is Phosphoribosyl-ATP pyrophosphatase of Cereibacter sphaeroides (strain KD131 / KCTC 12085) (Rhodobacter sphaeroides).